A 1905-amino-acid polypeptide reads, in one-letter code: von Willebrand factor A domain-containing protein 8 (1905 aa).

Residues 1–45 constitute a mitochondrion transit peptide; that stretch reads MQSRLLLLGAPGGLGDVASRRVRLLLRQVLRGRPGGDQQRLEVRL. The tract at residues 1–260 is interaction with PEX7; that stretch reads MQSRLLLLGA…PLDPPLRSRF (260 aa). An ATP-binding site is contributed by 446–453; that stretch reads GGKGCGKT. A compositionally biased stretch (basic and acidic residues) spans 1541–1560; sequence ERDSNEDVSDPKHGKEDPDN. Positions 1541-1583 are disordered; sequence ERDSNEDVSDPKHGKEDPDNMPHVGGNTWAGGTGGRDTAGLGG. Residues 1568–1583 are compositionally biased toward gly residues; that stretch reads TWAGGTGGRDTAGLGG. The region spanning 1714 to 1896 is the VWFA domain; sequence RLRLVVDVSG…KKIPQILQQI (183 aa).

Monomer. Interacts with PEX7. Interacts with PEX5 in a PEX7-dependent manner. Isoform 1 is predominantly expressed in liver, kidney, pancreas, heart, and skeletal muscle (at protein level).

Its subcellular location is the mitochondrion. Exhibits ATPase activity in vitro. In Mus musculus (Mouse), this protein is von Willebrand factor A domain-containing protein 8 (Vwa8).